The sequence spans 787 residues: Putative pentatricopeptide repeat-containing protein At1g69350, mitochondrial (787 aa).

The N-terminal 16 residues, 1-16 (MTQYMPLFRSCSSLRL), are a transit peptide targeting the mitochondrion. 19 PPR repeats span residues 33–63 (DPLP…FPYP), 64–98 (DSFM…TTQI), 99–134 (SKFV…GVDD), 135–165 (DAVI…MPVR), 166–200 (DLVA…GVEP), 201–235 (DAVT…MFDL), 236–266 (DETL…IAKK), 267–301 (NAVS…GIEP), 302–336 (NLVT…ELDP), 338–368 (YESL…VSDR), 369–403 (NIVA…RIKP), 404–434 (DAFT…VIRT), 438–468 (DEFV…IKHR), 469–503 (SVVT…YLEM), 504–534 (NEVT…LIIS), 538–568 (DLFT…MSSR), 569–603 (SIVS…GTKP), 604–638 (NEVV…GVSP), and 639–669 (NSEH…MPFL). A type E motif region spans residues 674 to 749 (VWGSLVNGCR…VPGYSAIEID (76 aa)). A type E(+) motif region spans residues 750–780 (QKVFRFGAGEENRIQTDEIYRFLGNLQNLTN).

It belongs to the PPR family. PCMP-E subfamily.

It is found in the mitochondrion. This is Putative pentatricopeptide repeat-containing protein At1g69350, mitochondrial (PCMP-E66) from Arabidopsis thaliana (Mouse-ear cress).